The following is a 262-amino-acid chain: Phosphatidylglycerol--prolipoprotein diacylglyceryl transferase (262 aa).

4 helical membrane-spanning segments follow: residues 9–29 (LGPL…ILAV), 41–61 (IIPD…ILGA), 80–100 (IFAI…GALV), and 109–129 (LINT…AQSL). Arg-131 contributes to the a 1,2-diacyl-sn-glycero-3-phospho-(1'-sn-glycerol) binding site. Transmembrane regions (helical) follow at residues 167–187 (QPTF…ILIF), 197–217 (GHIT…IEGM), and 226–246 (GLRV…MIVI).

The protein belongs to the Lgt family.

It localises to the cell membrane. It carries out the reaction L-cysteinyl-[prolipoprotein] + a 1,2-diacyl-sn-glycero-3-phospho-(1'-sn-glycerol) = an S-1,2-diacyl-sn-glyceryl-L-cysteinyl-[prolipoprotein] + sn-glycerol 1-phosphate + H(+). It functions in the pathway protein modification; lipoprotein biosynthesis (diacylglyceryl transfer). Functionally, catalyzes the transfer of the diacylglyceryl group from phosphatidylglycerol to the sulfhydryl group of the N-terminal cysteine of a prolipoprotein, the first step in the formation of mature lipoproteins. In Streptococcus pneumoniae (strain P1031), this protein is Phosphatidylglycerol--prolipoprotein diacylglyceryl transferase.